The following is a 217-amino-acid chain: Orotidine 5'-phosphate decarboxylase (217 aa).

Residues aspartate 14, lysine 36, 64 to 73 (DFKVADIPST), serine 120, 172 to 182 (PGVGAQGGNLS), glycine 197, and arginine 198 contribute to the substrate site. Catalysis depends on lysine 66, which acts as the Proton donor.

It belongs to the OMP decarboxylase family. Type 1 subfamily. As to quaternary structure, homodimer.

The enzyme catalyses orotidine 5'-phosphate + H(+) = UMP + CO2. The protein operates within pyrimidine metabolism; UMP biosynthesis via de novo pathway; UMP from orotate: step 2/2. Its function is as follows. Catalyzes the decarboxylation of orotidine 5'-monophosphate (OMP) to uridine 5'-monophosphate (UMP). The protein is Orotidine 5'-phosphate decarboxylase of Methanococcus maripaludis (strain DSM 14266 / JCM 13030 / NBRC 101832 / S2 / LL).